Here is a 340-residue protein sequence, read N- to C-terminus: NADH-quinone oxidoreductase subunit H (340 aa).

A run of 8 helical transmembrane segments spans residues 4-24, 78-98, 113-133, 151-171, 184-204, 244-264, 273-293, and 316-336; these read TIGI…PLLI, YLFV…WAVI, VLYL…AGWA, VSYE…AGSM, MLHW…ISGI, SMIL…LSPF, IFFI…FLFV, and VLIP…VAHV.

The protein belongs to the complex I subunit 1 family. In terms of assembly, NDH-1 is composed of 14 different subunits. Subunits NuoA, H, J, K, L, M, N constitute the membrane sector of the complex.

It localises to the cell inner membrane. The catalysed reaction is a quinone + NADH + 5 H(+)(in) = a quinol + NAD(+) + 4 H(+)(out). In terms of biological role, NDH-1 shuttles electrons from NADH, via FMN and iron-sulfur (Fe-S) centers, to quinones in the respiratory chain. The immediate electron acceptor for the enzyme in this species is believed to be ubiquinone. Couples the redox reaction to proton translocation (for every two electrons transferred, four hydrogen ions are translocated across the cytoplasmic membrane), and thus conserves the redox energy in a proton gradient. This subunit may bind ubiquinone. The polypeptide is NADH-quinone oxidoreductase subunit H (Legionella pneumophila subsp. pneumophila (strain Philadelphia 1 / ATCC 33152 / DSM 7513)).